The chain runs to 444 residues: Phosphoglucosamine mutase (444 aa).

Residue Ser-101 is the Phosphoserine intermediate of the active site. 4 residues coordinate Mg(2+): Ser-101, Asp-240, Asp-242, and Asp-244. The residue at position 101 (Ser-101) is a Phosphoserine.

Belongs to the phosphohexose mutase family. Mg(2+) serves as cofactor. In terms of processing, activated by phosphorylation.

It carries out the reaction alpha-D-glucosamine 1-phosphate = D-glucosamine 6-phosphate. Its function is as follows. Catalyzes the conversion of glucosamine-6-phosphate to glucosamine-1-phosphate. This Aeromonas salmonicida (strain A449) protein is Phosphoglucosamine mutase.